Consider the following 34-residue polypeptide: MLKMSGWQRQSQNQSWNLRRECSRRKCIFIHHHT.

As to quaternary structure, interacts with DDIT3 (isoform 1).

Its subcellular location is the nucleus. It localises to the cytoplasm. Functionally, product of the upstream open reading frame (uORF) of DDIT3/CHOP that is specifically produced in absence of stress, thereby preventing translation of downstream stress effector DDIT3/CHOP. This is DDIT3 upstream open reading frame protein from Homo sapiens (Human).